A 630-amino-acid polypeptide reads, in one-letter code: Molybdenum cofactor biosynthesis protein 1 (630 aa).

Positions 61–298 (RFNRHHTYLR…SKTYHVPGFK (238 aa)) constitute a Radical SAM core domain. Arginine 70 contributes to the GTP binding site. [4Fe-4S] cluster-binding residues include cysteine 77 and cysteine 81. Residue tyrosine 83 coordinates S-adenosyl-L-methionine. Cysteine 84 provides a ligand contact to [4Fe-4S] cluster. GTP is bound at residue arginine 120. Glycine 124 lines the S-adenosyl-L-methionine pocket. Threonine 151 is a binding site for GTP. Residue serine 175 coordinates S-adenosyl-L-methionine. Residue lysine 212 participates in GTP binding. Methionine 246 serves as a coordination point for S-adenosyl-L-methionine. 2 residues coordinate [4Fe-4S] cluster: cysteine 312 and cysteine 315. 317 to 319 (RLR) serves as a coordination point for GTP. Position 329 (cysteine 329) interacts with [4Fe-4S] cluster. Residues 402 to 629 (KEVKNYLLKL…GGKSSSPQIT (228 aa)) are molybdenum cofactor biosynthesis protein C. Aspartate 599 serves as the catalytic For molybdenum cofactor biosynthesis protein C activity.

The protein in the C-terminal section; belongs to the MoaC family. In the N-terminal section; belongs to the radical SAM superfamily. MoaA family. Isoform mocs1a and isoform mocs1b probably form a heterooligomer. The cofactor is [4Fe-4S] cluster.

The catalysed reaction is GTP + AH2 + S-adenosyl-L-methionine = (8S)-3',8-cyclo-7,8-dihydroguanosine 5'-triphosphate + 5'-deoxyadenosine + L-methionine + A + H(+). It catalyses the reaction (8S)-3',8-cyclo-7,8-dihydroguanosine 5'-triphosphate = cyclic pyranopterin phosphate + diphosphate. It functions in the pathway cofactor biosynthesis; molybdopterin biosynthesis. Functionally, isoform mocs1a and isoform mocs1b probably form a complex that catalyzes the conversion of 5'-GTP to cyclic pyranopterin monophosphate (cPMP). mocs1a catalyzes the cyclization of GTP to (8S)-3',8-cyclo-7,8-dihydroguanosine 5'-triphosphate and mocs1b catalyzes the subsequent conversion of (8S)-3',8-cyclo-7,8-dihydroguanosine 5'-triphosphate to cPMP. The chain is Molybdenum cofactor biosynthesis protein 1 (mocs1) from Dictyostelium discoideum (Social amoeba).